Here is a 123-residue protein sequence, read N- to C-terminus: RxLR effector protein Avh262 (123 aa).

Residues 1 to 18 form the signal peptide; that stretch reads MLPVAVVLVVFAVAVTSA. Residues 24 to 46 form a disordered region; that stretch reads VNPLPRRRRLKGTEEKGHHTNVN. A RxLR-dEER motif is present at residues 30–50; that stretch reads RRRLKGTEEKGHHTNVNDEER. Basic and acidic residues predominate over residues 34-46; that stretch reads KGTEEKGHHTNVN. Residues 60 to 82 are biP-binding; sequence LISKLKVKINAKLLAGDSAKPAT.

This sequence belongs to the RxLR effector family. Interacts with host plant ER-luminal binding immunoglobulin proteins (BiPs) such as soybean BiP1, BiP2, BiP3 and BiP4.

The protein resides in the secreted. It localises to the host endoplasmic reticulum. Effector that suppresses plant defense responses during the early stages of pathogen infection. Suppresses cell death induced by effectors and PAMPs in plant hosts. Avh262 stabilizes endoplasmic reticulum (ER)-luminal binding immunoglobulin proteins (BiPs), which act as negative regulators of plant resistance to Phytophthora. By stabilizing BiPs, Avh262 suppresses ER stress-triggered cell death and facilitates Phytophthora infection. The chain is RxLR effector protein Avh262 from Phytophthora sojae (Soybean stem and root rot agent).